Here is a 163-residue protein sequence, read N- to C-terminus: uncharacterized protein (163 aa).

This is an uncharacterized protein from Haemophilus phage HP1 (strain HP1c1) (Bacteriophage HP1).